Reading from the N-terminus, the 835-residue chain is Ribonucleoside-diphosphate reductase large subunit (835 aa).

Residues 1–39 (MPPRAPRPAGAVSPPFPPLAGPPLKARAPRARDSPLTSP) are disordered. Residues threonine 262, 277–278 (SC), glycine 308, 489–493 (NLCTE), and 666–670 (PTVSS) contribute to the substrate site. Residues cysteine 278 and cysteine 506 are joined by a disulfide bond. Residue asparagine 489 is the Proton acceptor of the active site. The active-site Cysteine radical intermediate is cysteine 491. Glutamate 493 functions as the Proton acceptor in the catalytic mechanism.

The protein belongs to the ribonucleoside diphosphate reductase large chain family. Heterotetramer composed of a homodimer of the large subunit (R1) and a homodimer of the small subunit (R2). Larger multisubunit protein complex are also active, composed of (R1)n(R2)n.

The catalysed reaction is a 2'-deoxyribonucleoside 5'-diphosphate + [thioredoxin]-disulfide + H2O = a ribonucleoside 5'-diphosphate + [thioredoxin]-dithiol. Its function is as follows. Ribonucleoside-diphosphate reductase holoenzyme provides the precursors necessary for viral DNA synthesis. Allows virus growth in non-dividing cells, as well as reactivation from latency in infected hosts. Catalyzes the biosynthesis of deoxyribonucleotides from the corresponding ribonucleotides. The chain is Ribonucleoside-diphosphate reductase large subunit from Suid herpesvirus 1 (strain Kaplan) (SuHV-1).